Consider the following 408-residue polypeptide: Na(+)-translocating NADH-quinone reductase subunit F (408 aa).

A helical transmembrane segment spans residues 4–24; sequence VYLGVGMFTAIVLVLVLVILF. One can recognise a 2Fe-2S ferredoxin-type domain in the interval 33-127; the sequence is GDIIIGINGD…DMEIELDEEI (95 aa). Residues Cys70, Cys76, Cys79, and Cys111 each coordinate [2Fe-2S] cluster. One can recognise an FAD-binding FR-type domain in the interval 130-270; sequence IKKWECDVIS…SGPFGEFFAK (141 aa).

This sequence belongs to the NqrF family. In terms of assembly, composed of six subunits; NqrA, NqrB, NqrC, NqrD, NqrE and NqrF. [2Fe-2S] cluster is required as a cofactor. The cofactor is FAD.

The protein localises to the cell inner membrane. The enzyme catalyses a ubiquinone + n Na(+)(in) + NADH + H(+) = a ubiquinol + n Na(+)(out) + NAD(+). In terms of biological role, NQR complex catalyzes the reduction of ubiquinone-1 to ubiquinol by two successive reactions, coupled with the transport of Na(+) ions from the cytoplasm to the periplasm. The first step is catalyzed by NqrF, which accepts electrons from NADH and reduces ubiquinone-1 to ubisemiquinone by a one-electron transfer pathway. This Shewanella denitrificans (strain OS217 / ATCC BAA-1090 / DSM 15013) protein is Na(+)-translocating NADH-quinone reductase subunit F.